The sequence spans 283 residues: Protein/nucleic acid deglycase HchA (283 aa).

Zn(2+) contacts are provided by His86, Glu91, and His123. Cys185 serves as the catalytic Nucleophile.

It belongs to the peptidase C56 family. HchA subfamily. Homodimer.

The protein localises to the cytoplasm. The catalysed reaction is N(omega)-(1-hydroxy-2-oxopropyl)-L-arginyl-[protein] + H2O = lactate + L-arginyl-[protein] + H(+). It carries out the reaction N(6)-(1-hydroxy-2-oxopropyl)-L-lysyl-[protein] + H2O = lactate + L-lysyl-[protein] + H(+). It catalyses the reaction S-(1-hydroxy-2-oxopropyl)-L-cysteinyl-[protein] + H2O = lactate + L-cysteinyl-[protein] + H(+). The enzyme catalyses N(omega)-(1-hydroxy-2-oxoethyl)-L-arginyl-[protein] + H2O = L-arginyl-[protein] + glycolate + H(+). The catalysed reaction is N(6)-(1-hydroxy-2-oxoethyl)-L-lysyl-[protein] + H2O = glycolate + L-lysyl-[protein] + H(+). It carries out the reaction S-(1-hydroxy-2-oxoethyl)-L-cysteinyl-[protein] + H2O = glycolate + L-cysteinyl-[protein] + H(+). It catalyses the reaction N(2)-(1-hydroxy-2-oxopropyl)-dGTP + H2O = lactate + dGTP + H(+). The enzyme catalyses N(2)-(1-hydroxy-2-oxopropyl)-GTP + H2O = lactate + GTP + H(+). The catalysed reaction is N(2)-(1-hydroxy-2-oxopropyl)-GDP + H2O = lactate + GDP + H(+). It carries out the reaction N(2)-(1-hydroxy-2-oxopropyl)-GMP + H2O = lactate + GMP + H(+). It catalyses the reaction N(2)-(1-hydroxy-2-oxoethyl)-dGTP + H2O = dGTP + glycolate + H(+). The enzyme catalyses N(2)-(1-hydroxy-2-oxoethyl)-GTP + H2O = glycolate + GTP + H(+). The catalysed reaction is N(2)-(1-hydroxy-2-oxoethyl)-GDP + H2O = glycolate + GDP + H(+). It carries out the reaction N(2)-(1-hydroxy-2-oxoethyl)-GMP + H2O = glycolate + GMP + H(+). It catalyses the reaction an N(2)-(1-hydroxy-2-oxopropyl)-guanosine in RNA + H2O = a guanosine in RNA + lactate + H(+). The enzyme catalyses an N(2)-(1-hydroxy-2-oxopropyl)-2'-deoxyguanosine in DNA + H2O = a 2'-deoxyguanosine in DNA + lactate + H(+). The catalysed reaction is an N(2)-(1-hydroxy-2-oxoethyl)-guanosine in RNA + H2O = a guanosine in RNA + glycolate + H(+). It carries out the reaction an N(2)-(1-hydroxy-2-oxoethyl)-2'-deoxyguanosine in DNA + H2O = a 2'-deoxyguanosine in DNA + glycolate + H(+). Its function is as follows. Protein and nucleotide deglycase that catalyzes the deglycation of the Maillard adducts formed between amino groups of proteins or nucleotides and reactive carbonyl groups of glyoxals. Thus, functions as a protein deglycase that repairs methylglyoxal- and glyoxal-glycated proteins, and releases repaired proteins and lactate or glycolate, respectively. Deglycates cysteine, arginine and lysine residues in proteins, and thus reactivates these proteins by reversing glycation by glyoxals. Acts on early glycation intermediates (hemithioacetals and aminocarbinols), preventing the formation of Schiff bases and advanced glycation endproducts (AGE). Also functions as a nucleotide deglycase able to repair glycated guanine in the free nucleotide pool (GTP, GDP, GMP, dGTP) and in DNA and RNA. Is thus involved in a major nucleotide repair system named guanine glycation repair (GG repair), dedicated to reversing methylglyoxal and glyoxal damage via nucleotide sanitization and direct nucleic acid repair. Plays an important role in protecting cells from carbonyl stress. This chain is Protein/nucleic acid deglycase HchA, found in Escherichia coli O157:H7.